Here is a 115-residue protein sequence, read N- to C-terminus: Chondroitin proteoglycan 8 (115 aa).

The first 16 residues, 1–16 (MRPFILLALLVSVTVA), serve as a signal peptide directing secretion. Residues 33 to 96 (VRRTTRDASD…GSGAAEVTSV (64 aa)) form a disordered region. O-linked (Xyl...) (chondroitin sulfate) serine glycosylation is found at serine 61, serine 63, serine 84, serine 88, and serine 109.

The chain is Chondroitin proteoglycan 8 from Caenorhabditis elegans.